We begin with the raw amino-acid sequence, 437 residues long: Testis-specific Y-encoded-like protein 1 (437 aa).

The tract at residues 1–81 is disordered; that stretch reads MSGLDGVKRT…QDAAGRGGTP (81 aa). Over residues 11 to 26 the composition is skewed to polar residues; that stretch reads TPLQTHSIIISDQVPS. The segment covering 28-40 has biased composition (basic and acidic residues); the sequence is QDAHQYLRLRDQS. Residue K156 forms a Glycyl lysine isopeptide (Lys-Gly) (interchain with G-Cter in SUMO2) linkage.

It belongs to the nucleosome assembly protein (NAP) family. In terms of processing, ubiquitinated by the CRL2(APPBP2) complex, which recognizes the Arg-Xaa-Xaa-Gly sequence at the C-terminus, leading to its degradation. As to expression, expressed in testis, ovary, liver, spleen, brain, kidney, prostate, lung, liver, and heart.

The protein localises to the nucleus. Its subcellular location is the nucleolus. The chain is Testis-specific Y-encoded-like protein 1 (TSPYL1) from Homo sapiens (Human).